The following is a 979-amino-acid chain: Disks large-associated protein 3 (979 aa).

The span at 1–10 (MRGYHGDRGS) shows a compositional bias: basic and acidic residues. Disordered stretches follow at residues 1–20 (MRGY…FADQ), 52–95 (AGLG…MYPG), 136–169 (FHTL…SPSR), 182–291 (AKSH…CLEG), 400–429 (AMGD…TRRS), and 537–581 (FRKA…RCSS). A Phosphoserine modification is found at S58. Gly residues predominate over residues 73 to 86 (PEGGPAGAGVGGGS). The span at 190-202 (PGKRDYNGPKAEG) shows a compositional bias: basic and acidic residues. Gly residues predominate over residues 203–218 (RGGSGGDSYPGPGSGG). Positions 221 to 246 (TSHHHHHHHHHHHHQSRHGKRSKSKD) are enriched in basic residues. Phosphoserine is present on residues S406, S409, S412, and S416. Over residues 540–549 (APPPIPPGSQ) the composition is skewed to pro residues. A phosphoserine mark is found at S643 and S645. 2 disordered regions span residues 741–790 (EGYP…RASP) and 908–940 (EEKK…DRQR). 2 stretches are compositionally biased toward basic and acidic residues: residues 769 to 779 (GRRDSWIERGS) and 927 to 940 (PVKE…DRQR). Phosphoserine is present on residues S932, S935, and S967.

The protein belongs to the SAPAP family. As to quaternary structure, interacts with DLG4/PSD-95.

Its subcellular location is the cell membrane. It is found in the postsynaptic density. It localises to the synapse. In terms of biological role, may play a role in the molecular organization of synapses and neuronal cell signaling. Could be an adapter protein linking ion channel to the subsynaptic cytoskeleton. May induce enrichment of PSD-95/SAP90 at the plasma membrane. This chain is Disks large-associated protein 3 (DLGAP3), found in Homo sapiens (Human).